The chain runs to 492 residues: N-succinylglutamate 5-semialdehyde dehydrogenase (492 aa).

220-225 (GSANTG) provides a ligand contact to NAD(+). Catalysis depends on residues E243 and C277.

The protein belongs to the aldehyde dehydrogenase family. AstD subfamily.

The enzyme catalyses N-succinyl-L-glutamate 5-semialdehyde + NAD(+) + H2O = N-succinyl-L-glutamate + NADH + 2 H(+). It functions in the pathway amino-acid degradation; L-arginine degradation via AST pathway; L-glutamate and succinate from L-arginine: step 4/5. In terms of biological role, catalyzes the NAD-dependent reduction of succinylglutamate semialdehyde into succinylglutamate. The polypeptide is N-succinylglutamate 5-semialdehyde dehydrogenase (Escherichia coli O9:H4 (strain HS)).